The sequence spans 259 residues: Peroxisomal membrane protein 11B (259 aa).

Residue Lys43 is modified to N6-acetyllysine. Residues 157 to 176 are disordered; that stretch reads LKGSGGGVPGGSETGGLGGP. Over residues 159 to 176 the composition is skewed to gly residues; it reads GSGGGVPGGSETGGLGGP. Positions 211 to 259 are interaction with PEX19, PEX11G and FIS1 and peroxisome targeting; sequence VVRNACDLFIPLDKLGLWRCGPGIVGLCGLVSSILSILTLIYPWLRLKP. Residues 233-255 traverse the membrane as a helical segment; it reads GIVGLCGLVSSILSILTLIYPWL.

Belongs to the peroxin-11 family. As to quaternary structure, homodimer. Heterodimer with PEX11G. Interacts with PEX19. Interacts with FIS1.

Its subcellular location is the peroxisome membrane. Involved in peroxisomal proliferation. May regulate peroxisome division by recruiting the dynamin-related GTPase DNM1L to the peroxisomal membrane. Promotes membrane protrusion and elongation on the peroxisomal surface. This Homo sapiens (Human) protein is Peroxisomal membrane protein 11B (PEX11B).